We begin with the raw amino-acid sequence, 323 residues long: UPF0065 protein BP0148 (323 aa).

The signal sequence occupies residues methionine 1–alanine 24.

Belongs to the UPF0065 (bug) family.

The protein resides in the periplasm. The polypeptide is UPF0065 protein BP0148 (Bordetella pertussis (strain Tohama I / ATCC BAA-589 / NCTC 13251)).